The sequence spans 156 residues: Endogenous retrovirus group K member 8 Pro protein (156 aa).

Residues 21–96 (FEGLVDTGAD…IPLNLWGRDL (76 aa)) form the Peptidase A2 domain. D26 is an active-site residue. The G-patch domain occupies 111 to 156 (YSPTSQKIMTKRGYIPGKGLGKNEDGIKIPFEAKINQKREGIGYPF).

Belongs to the peptidase A2 family. HERV class-II K(HML-2) subfamily. As to quaternary structure, active as a homodimer. Post-translationally, autoproteolytically processed at the N-terminus. Expected C-terminal autoprocessing not detected. The sequence shown is that of the processed Pro protein.

It catalyses the reaction Processing at the authentic HIV-1 PR recognition site and release of the mature p17 matrix and the p24 capsid protein, as a result of the cleavage of the -SQNY-|-PIVQ- cleavage site.. Retroviral proteases have roles in the processing of the primary translation products and the maturation of the viral particle. Endogenous Pro proteins may have kept, lost or modified their original function during evolution. In Homo sapiens (Human), this protein is Endogenous retrovirus group K member 8 Pro protein (ERVK-8).